Consider the following 232-residue polypeptide: Large ribosomal subunit protein uL1 (232 aa).

The protein belongs to the universal ribosomal protein uL1 family. As to quaternary structure, part of the 50S ribosomal subunit.

Its function is as follows. Binds directly to 23S rRNA. The L1 stalk is quite mobile in the ribosome, and is involved in E site tRNA release. In terms of biological role, protein L1 is also a translational repressor protein, it controls the translation of the L11 operon by binding to its mRNA. The protein is Large ribosomal subunit protein uL1 of Rhizorhabdus wittichii (strain DSM 6014 / CCUG 31198 / JCM 15750 / NBRC 105917 / EY 4224 / RW1) (Sphingomonas wittichii).